Consider the following 185-residue polypeptide: Photosystem I assembly protein Ycf4 (185 aa).

3 helical membrane passes run 22 to 42 (FFFASIILGGALGFLLVGFSS), 57 to 77 (ILFVPQGIVMCFYGIAGLFFS), and 101 to 121 (FYVFFAGVSQGKIVVFFLRVP).

It belongs to the Ycf4 family.

The protein localises to the plastid. The protein resides in the chloroplast thylakoid membrane. In terms of biological role, seems to be required for the assembly of the photosystem I complex. This is Photosystem I assembly protein Ycf4 from Gnetum parvifolium (Small-leaved jointfir).